The primary structure comprises 360 residues: Aminomethyltransferase (360 aa).

It belongs to the GcvT family. As to quaternary structure, the glycine cleavage system is composed of four proteins: P, T, L and H.

The catalysed reaction is N(6)-[(R)-S(8)-aminomethyldihydrolipoyl]-L-lysyl-[protein] + (6S)-5,6,7,8-tetrahydrofolate = N(6)-[(R)-dihydrolipoyl]-L-lysyl-[protein] + (6R)-5,10-methylene-5,6,7,8-tetrahydrofolate + NH4(+). In terms of biological role, the glycine cleavage system catalyzes the degradation of glycine. The polypeptide is Aminomethyltransferase (Legionella pneumophila (strain Corby)).